The following is a 672-amino-acid chain: Hydrogenase-4 component B (672 aa).

The Periplasmic segment spans residues 1–5 (MDALQ). A helical transmembrane segment spans residues 6-26 (LLTWSLILYLFASLASLFLLG). The Cytoplasmic segment spans residues 27–30 (LDRL). A helical membrane pass occupies residues 31–51 (AIKLSGITSLVGGVIGIISGI). The Periplasmic portion of the chain corresponds to 52 to 79 (TQLHAGVTLVARFAPPFEFADLTLRMDS). Residues 80–100 (LSAFMVLVISLLVVVCSLYSL) form a helical membrane-spanning segment. The Cytoplasmic portion of the chain corresponds to 101-119 (TYMREYEGKGAAAMGFFMN). Residues 120–140 (IFIASMVALLVMDNAFWFIVL) form a helical membrane-spanning segment. Topologically, residues 141–164 (FEMMSLSSWFLVIARQDKTSINAG) are periplasmic. The chain crosses the membrane as a helical span at residues 165 to 185 (MLYFFIAHAGSVLIMIAFLLM). Residues 186–199 (GRESGSLDFASFRT) are Cytoplasmic-facing. Residues 200-220 (LSLSPGLASAVFLLAFFGFGA) form a helical membrane-spanning segment. The Periplasmic segment spans residues 221–242 (KAGMMPLHSWLPRAHPAAPSHA). The helical transmembrane segment at 243-263 (SALMSGVMVKIGIFGILKVAM) threads the bilayer. Over 264-272 (DLLAQTGLP) the chain is Cytoplasmic. The chain crosses the membrane as a helical span at residues 273–293 (LWWGILVMAIGAISALLGVLY). The Periplasmic segment spans residues 294–311 (ALAEQDIKRLLAWSTVEN). A helical transmembrane segment spans residues 312 to 332 (VGIILLAVGVAMVGLSLHDPL). The Cytoplasmic portion of the chain corresponds to 333–342 (LTVVGLLGAL). A helical membrane pass occupies residues 343–363 (FHLLNHALFKGLLFLGAGAII). The Periplasmic portion of the chain corresponds to 364–384 (SRLHTHDMEKMGALAKRMPWT). The chain crosses the membrane as a helical span at residues 385–405 (AAACLIGCLAISAIPPLNGFI). Residues 406–427 (SEWYTWQSLFSLSRVEAVALQL) are Cytoplasmic-facing. The helical transmembrane segment at 428–448 (AGPIAMVMLAVTGGLAVMCFV) threads the bilayer. The Periplasmic portion of the chain corresponds to 449–474 (KMYGITFCGAPRSTHAEEAQEVPNTM). A helical transmembrane segment spans residues 475 to 495 (IVAMLLLAALCVLIALSASWL). Residues 496–504 (APKIMHIAH) lie on the Cytoplasmic side of the membrane. The helical transmembrane segment at 505–525 (AFTNTPPATVASGIALVPGTF) threads the bilayer. The Periplasmic portion of the chain corresponds to 526–531 (HTQVTP). The helical transmembrane segment at 532 to 552 (SLLLLLLLAMPLLPGLYWLWC) threads the bilayer. Topologically, residues 553-651 (RSRRAAFRRT…KEIQHLQSGD (99 aa)) are cytoplasmic. The helical transmembrane segment at 652 to 672 (FRLYCLYVVAALVVLLIAIAV) threads the bilayer.

The protein belongs to the complex I subunit 5 family.

The protein resides in the cell inner membrane. Its function is as follows. Possible component of hydrogenase 4. This is Hydrogenase-4 component B from Escherichia coli (strain K12).